The following is a 59-amino-acid chain: UPF0434 protein RHOS4_00640 (59 aa).

This sequence belongs to the UPF0434 family.

The sequence is that of UPF0434 protein RHOS4_00640 from Cereibacter sphaeroides (strain ATCC 17023 / DSM 158 / JCM 6121 / CCUG 31486 / LMG 2827 / NBRC 12203 / NCIMB 8253 / ATH 2.4.1.) (Rhodobacter sphaeroides).